The primary structure comprises 586 residues: MKQSVSAEQIELKSSLPGSKKVYVDGPREGMKVPMREIEQSDTNGVPNPPIRVYDTSGPYTDPEYKVELEKGLQAPRHSWILERGDVEAYEGREVKPEDDGVKVASKHTPVFPQMDRKPLRAKQGANVTQMHYARNGIITSEMEYVAIREGVEPEFVRKEIAEGRAILPANINHPEAEPMIIGRNFHVKVNANIGNSAVSSSIAEEVEKMTWATRWGADTIMDLSTGKNIHTTREWIIRNAPVPVGTVPIYQALEKVNGIAEDLTWEVYRDTLIEQAEQGVDYFTIHAGVLLRYIPITAKRTTGIVSRGGSIMAQWCLFHHKENFLYTHFEEICEIMKQYDVSFSLGDGLRPGSIADANDEAQFSELETLGELTKIAWKHDVQVMIEGPGHVPMHLIKENMEKELDICQGAPFYTLGPLTTDIAPGYDHITSAIGAAMIGWFGTAMLCYVTPKEHLGLPNKDDVREGVITYKIAAHAADLAKGHKTAHQRDDALSKARFEFRWRDQFNLSLDPERAMEYHDETLPAEGAKTAHFCSMCGPKFCSMRISHDIREYAKENDLETTEAIEKGMKEKAKEFKETGSHLYQ.

Residues 1-59 are disordered; sequence MKQSVSAEQIELKSSLPGSKKVYVDGPREGMKVPMREIEQSDTNGVPNPPIRVYDTSGP. Positions 22-39 are enriched in basic and acidic residues; that stretch reads VYVDGPREGMKVPMREIE. Residues N193, M222, Y251, H287, 307-309, 348-351, and E387 each bind substrate; these read SRG and DGLR. A Zn(2+)-binding site is contributed by H391. Position 414 (Y414) interacts with substrate. H455 contacts Zn(2+). [4Fe-4S] cluster-binding residues include C535, C538, and C543.

It belongs to the ThiC family. [4Fe-4S] cluster serves as cofactor.

The catalysed reaction is 5-amino-1-(5-phospho-beta-D-ribosyl)imidazole + S-adenosyl-L-methionine = 4-amino-2-methyl-5-(phosphooxymethyl)pyrimidine + CO + 5'-deoxyadenosine + formate + L-methionine + 3 H(+). The protein operates within cofactor biosynthesis; thiamine diphosphate biosynthesis. Functionally, catalyzes the synthesis of the hydroxymethylpyrimidine phosphate (HMP-P) moiety of thiamine from aminoimidazole ribotide (AIR) in a radical S-adenosyl-L-methionine (SAM)-dependent reaction. This Bacillus cereus (strain ATCC 10987 / NRS 248) protein is Phosphomethylpyrimidine synthase.